Here is a 328-residue protein sequence, read N- to C-terminus: Eukaryotic translation initiation factor 3 subunit I (328 aa).

WD repeat units lie at residues 8 to 49, 50 to 89, 145 to 184, 189 to 228, and 286 to 327; these read GHER…GTYE, GHTGAIWTCDINKSSTLMVSGAADNTMRLWDVKTGKQLYK, TRESKATVAGWSYLSKFLFTGHEDGSVSRYDAITGEFVES, NSGSTITDLQFYPDRTYFITSCKDTTAKAIDVDSFEVIKT, and GHFG…FKYT.

This sequence belongs to the eIF-3 subunit I family. Component of the eukaryotic translation initiation factor 3 (eIF-3) complex. The eIF-3 complex appears to include tif32/eif3a, SPAC25G10.08/eif3b, tif33/eif3c, SPBC4C3.07/eif3f, tif35/eif3g and sum1/eif3i. This set of common subunits may also associate exclusively with either moe1/eif3d and int6/eif3e, or with SPAC821.05/eif3h and SPAC1751.03/eif3m. The eIF-3 complex may also include SPAC3A12.13c/eif3j.

It localises to the cytoplasm. The protein localises to the nucleus. In terms of biological role, component of the eukaryotic translation initiation factor 3 (eIF-3) complex, which is involved in protein synthesis of a specialized repertoire of mRNAs and, together with other initiation factors, stimulates binding of mRNA and methionyl-tRNAi to the 40S ribosome. The eIF-3 complex specifically targets and initiates translation of a subset of mRNAs involved in cell proliferation. This chain is Eukaryotic translation initiation factor 3 subunit I (sum1), found in Schizosaccharomyces pombe (strain 972 / ATCC 24843) (Fission yeast).